The chain runs to 537 residues: Tyrosine-protein kinase Fyn (537 aa).

The N-myristoyl glycine moiety is linked to residue Gly2. S-palmitoyl cysteine attachment occurs at residues Cys3 and Cys6. Thr12 carries the post-translational modification Phosphothreonine; by PKC. Positions 82 to 143 (TGVTLFVALY…PSNYVAPVDS (62 aa)) constitute an SH3 domain. Residues 149-246 (WYFGKLGRKD…GLCCRLVVPC (98 aa)) form the SH2 domain. In terms of domain architecture, Protein kinase spans 271-524 (LQLIKRLGNG…YLQAFLEDYF (254 aa)). ATP contacts are provided by residues 277 to 285 (LGNGQFGEV) and Lys299. The active-site Proton acceptor is Asp390. A Phosphotyrosine; by autocatalysis modification is found at Tyr420. The residue at position 531 (Tyr531) is a Phosphotyrosine.

The protein belongs to the protein kinase superfamily. Tyr protein kinase family. SRC subfamily. As to quaternary structure, associates through its SH3 domain, to the p85 subunit of phosphatidylinositol 3-kinase. Mn(2+) serves as cofactor.

The enzyme catalyses L-tyrosyl-[protein] + ATP = O-phospho-L-tyrosyl-[protein] + ADP + H(+). With respect to regulation, inhibited by phosphorylation of Tyr-531 by leukocyte common antigen and activated by dephosphorylation of this site. Tyrosine-protein kinase implicated in the control of cell growth. Plays a role in the regulation of intracellular calcium levels. Required in brain development and mature brain function with important roles in the regulation of axon growth, axon guidance, and neurite extension. This chain is Tyrosine-protein kinase Fyn (fyn), found in Xiphophorus hellerii (Green swordtail).